We begin with the raw amino-acid sequence, 206 residues long: Large ribosomal subunit protein uL4 (206 aa).

Residues 42–54 (RRQQGTHQSQGRS) are compositionally biased toward polar residues. The interval 42–93 (RRQQGTHQSQGRSDVSRTGAKMFKQKGTGRARHSSARAPQFRGGGKAHGPVV) is disordered. Basic residues predominate over residues 64–76 (FKQKGTGRARHSS).

Belongs to the universal ribosomal protein uL4 family. In terms of assembly, part of the 50S ribosomal subunit.

One of the primary rRNA binding proteins, this protein initially binds near the 5'-end of the 23S rRNA. It is important during the early stages of 50S assembly. It makes multiple contacts with different domains of the 23S rRNA in the assembled 50S subunit and ribosome. Its function is as follows. Forms part of the polypeptide exit tunnel. The polypeptide is Large ribosomal subunit protein uL4 (Bartonella henselae (strain ATCC 49882 / DSM 28221 / CCUG 30454 / Houston 1) (Rochalimaea henselae)).